The following is a 518-amino-acid chain: MTSSEIAMPGEVKADPAALMASLQLLPSPTPNLEIKYTKIFINNEWQNSESGRVFPVCNPATGEQVCEVQEADKVDIDKAVQAARLAFSLGSVWRRMDASERGRLLDKLADLVERDRATLATMESLNGGKPFLQAFYIDLQGVIKTLRYYAGWADKIHGMTIPVDGDYFTFTRHEPIGVCGQIIPWNFPLLMFTWKIAPALCCGNTVVIKPAEQTPLSALYMGALIKEAGFPPGVVNILPGYGPTAGAAIASHIGIDKIAFTGSTEVGKLIQEAAGRSNLKRVTLELGGKSPNIIFADADLDYAVEQAHQGVFFNQGQCCTAGSRIFVEESIYEEFVKRSVERAKRRIVGSPFDPTTEQGPQIDKKQYNKILELIQSGVAEGAKLECGGKGLGRKGFFIEPTVFSNVTDDMRIAKEEIFGPVQEILRFKTMDEVIERANNSDFGLVAAVFTNDINKALMVSSAMQAGTVWINCYNALNAQSPFGGFKMSGNGREMGEFGLREYSEVKTVTVKIPQKNS.

Tyr-168 is modified (phosphotyrosine). NAD(+)-binding positions include 184–186 (IPW), 210–213 (KPAE), and 264–266 (STE). The active-site Proton acceptor is the Glu-286. Catalysis depends on Cys-320, which acts as the Nucleophile. A Phosphoserine modification is found at Ser-351. NAD(+) contacts are provided by residues 366 to 370 (KQYNK) and Glu-417.

Belongs to the aldehyde dehydrogenase family. As to quaternary structure, homotetramer. Found in testis and less abundantly in lung, brain, heart, liver and kidney.

Its subcellular location is the cytoplasm. It carries out the reaction retinal + NAD(+) + H2O = retinoate + NADH + 2 H(+). It catalyses the reaction all-trans-retinal + NAD(+) + H2O = all-trans-retinoate + NADH + 2 H(+). The catalysed reaction is all-trans-13,14-dihydroretinal + NAD(+) + H2O = all-trans-13,14-dihydroretinoate + NADH + 2 H(+). Its pathway is cofactor metabolism; retinol metabolism. Functionally, catalyzes the NAD-dependent oxidation of aldehyde substrates, such as all-trans-retinal and all-trans-13,14-dihydroretinal, to their corresponding carboxylic acids, all-trans-retinoate and all-trans-13,14-dihydroretinoate, respectively. Retinoate signaling is critical for the transcriptional control of many genes, for instance it is crucial for initiation of meiosis in both male and female. Recognizes retinal as substrate, both in its free form and when bound to cellular retinol-binding protein. Lacks activity with benzaldehyde, acetaldehyde and octanal. Displays complete lack of activity with citral. This is Retinal dehydrogenase 2 (Aldh1a2) from Rattus norvegicus (Rat).